We begin with the raw amino-acid sequence, 190 residues long: UPF0301 protein TC_0483 (190 aa).

The protein belongs to the UPF0301 (AlgH) family.

In Chlamydia muridarum (strain MoPn / Nigg), this protein is UPF0301 protein TC_0483.